Here is a 100-residue protein sequence, read N- to C-terminus: Urease subunit gamma (100 aa).

The protein belongs to the urease gamma subunit family. In terms of assembly, heterotrimer of UreA (gamma), UreB (beta) and UreC (alpha) subunits. Three heterotrimers associate to form the active enzyme.

The protein localises to the cytoplasm. It carries out the reaction urea + 2 H2O + H(+) = hydrogencarbonate + 2 NH4(+). The protein operates within nitrogen metabolism; urea degradation; CO(2) and NH(3) from urea (urease route): step 1/1. The protein is Urease subunit gamma of Burkholderia orbicola (strain MC0-3).